The chain runs to 286 residues: tRNA (guanine-N(7)-)-methyltransferase (286 aa).

The segment at 1 to 21 (MTNPESTAIDPVAAMGTDHTE) is disordered. S-adenosyl-L-methionine-binding residues include Glu-91, Glu-116, Asn-143, and Asp-165. Asp-165 is a catalytic residue. Substrate contacts are provided by residues Lys-169, Asp-201, and 262–265 (TNFE).

Belongs to the class I-like SAM-binding methyltransferase superfamily. TrmB family.

It catalyses the reaction guanosine(46) in tRNA + S-adenosyl-L-methionine = N(7)-methylguanosine(46) in tRNA + S-adenosyl-L-homocysteine. It participates in tRNA modification; N(7)-methylguanine-tRNA biosynthesis. Functionally, catalyzes the formation of N(7)-methylguanine at position 46 (m7G46) in tRNA. The protein is tRNA (guanine-N(7)-)-methyltransferase of Bifidobacterium longum (strain NCC 2705).